The primary structure comprises 66 residues: DNA gyrase inhibitor YacG (66 aa).

Positions 9, 12, 28, and 32 each coordinate Zn(2+). A disordered region spans residues His45–His66.

This sequence belongs to the DNA gyrase inhibitor YacG family. In terms of assembly, interacts with GyrB. It depends on Zn(2+) as a cofactor.

Its function is as follows. Inhibits all the catalytic activities of DNA gyrase by preventing its interaction with DNA. Acts by binding directly to the C-terminal domain of GyrB, which probably disrupts DNA binding by the gyrase. In Pseudomonas putida (strain ATCC 700007 / DSM 6899 / JCM 31910 / BCRC 17059 / LMG 24140 / F1), this protein is DNA gyrase inhibitor YacG.